We begin with the raw amino-acid sequence, 188 residues long: Peptide deformylase (188 aa).

2 residues coordinate Fe cation: Cys-109 and His-152. Glu-153 is an active-site residue. His-156 contacts Fe cation.

It belongs to the polypeptide deformylase family. Fe(2+) serves as cofactor.

It carries out the reaction N-terminal N-formyl-L-methionyl-[peptide] + H2O = N-terminal L-methionyl-[peptide] + formate. Removes the formyl group from the N-terminal Met of newly synthesized proteins. Requires at least a dipeptide for an efficient rate of reaction. N-terminal L-methionine is a prerequisite for activity but the enzyme has broad specificity at other positions. The chain is Peptide deformylase from Chloroflexus aggregans (strain MD-66 / DSM 9485).